The primary structure comprises 142 residues: Large ribosomal subunit protein uL11 (142 aa).

It belongs to the universal ribosomal protein uL11 family. Part of the ribosomal stalk of the 50S ribosomal subunit. Interacts with L10 and the large rRNA to form the base of the stalk. L10 forms an elongated spine to which L12 dimers bind in a sequential fashion forming a multimeric L10(L12)X complex. Post-translationally, one or more lysine residues are methylated.

Forms part of the ribosomal stalk which helps the ribosome interact with GTP-bound translation factors. This chain is Large ribosomal subunit protein uL11, found in Shewanella oneidensis (strain ATCC 700550 / JCM 31522 / CIP 106686 / LMG 19005 / NCIMB 14063 / MR-1).